We begin with the raw amino-acid sequence, 345 residues long: Inositol phosphoceramide mannosyltransferase 2 (345 aa).

A helical transmembrane segment spans residues 4-24; sequence VIYKFAVFAAVNFFLMSSIVL. Residue asparagine 55 is glycosylated (N-linked (GlcNAc...) asparagine). The helical transmembrane segment at 220 to 240 threads the bilayer; the sequence is YWLPYLTIMLSTGPLSISFLW. The N-linked (GlcNAc...) asparagine glycan is linked to asparagine 269. A helical membrane pass occupies residues 296-316; it reads LAYVIVAGFCLYFILSYMFFS.

It belongs to the glycosyltransferase 32 family.

It localises to the golgi apparatus. It is found in the cis-Golgi network membrane. The protein localises to the trans-Golgi network membrane. Its function is as follows. With imt1 and imt3, is required for the synthesis of mannosyl phosphorylinositol ceramide (MIPC). Catalyzes the addition of mannosyl to phosphorylinositol ceramide (IPC). MIPC is essential for cell morphology, cell-surface distribution of ergosterol, localization for plasma-membrane transporters, and lipid-raft-mediated endocytosis of plasma membrane proteins to the vacuole. The polypeptide is Inositol phosphoceramide mannosyltransferase 2 (Schizosaccharomyces pombe (strain 972 / ATCC 24843) (Fission yeast)).